The sequence spans 179 residues: Laminin-binding fimbrial subunit ElfA (179 aa).

Residues 1–21 (MKKSVLTAFITVVCATSSVMA) form the signal peptide.

This sequence belongs to the fimbrial protein family.

Its subcellular location is the fimbrium. Its function is as follows. Part of the elfADCG fimbrial operon, which could be required for adherence to host epithelial cells. ElfA is an accessory colonization factor that contributes to adherence of bacteria to human intestinal epithelial cells and to animal intestinal tissue in vitro. Binds specifically to laminin, but not to fibronectin or collagen type IV. The protein is Laminin-binding fimbrial subunit ElfA (elfA) of Escherichia coli O157:H7.